A 481-amino-acid chain; its full sequence is uncharacterized protein (481 aa).

The chain crosses the membrane as a helical span at residues 18-38; the sequence is FMIVTAIAVAIFVVITGVVIF.

It is found in the cell inner membrane. Its function is as follows. Involved in DNA conjugation in the recipient strain. This is an uncharacterized protein from Mycolicibacterium smegmatis (strain MKD8) (Mycobacterium smegmatis).